The following is a 341-amino-acid chain: Cell division protein FtsQ (341 aa).

At 1 to 126 the chain is on the cytoplasmic side; that stretch reads MTETDEGAPV…VARGVVRGLK (126 aa). The chain crosses the membrane as a helical span at residues 127 to 147; it reads TLFATVMFSIAGFGLGLALYV. The Extracellular segment spans residues 148 to 341; the sequence is TPAMSVRNIV…VSSPDLPTVK (194 aa). One can recognise a POTRA domain in the interval 151 to 219; sequence MSVRNIVVTG…SALRITIVER (69 aa).

The protein belongs to the FtsQ/DivIB family. FtsQ subfamily.

It localises to the cell membrane. Its function is as follows. Essential cell division protein. The polypeptide is Cell division protein FtsQ (Mycobacterium leprae (strain Br4923)).